A 764-amino-acid polypeptide reads, in one-letter code: 5-methyltetrahydropteroyltriglutamate--homocysteine methyltransferase (764 aa).

Residues 17–20 (RELK) and lysine 117 contribute to the 5-methyltetrahydropteroyltri-L-glutamate site. L-homocysteine contacts are provided by residues 436–438 (IGS) and glutamate 489. L-methionine-binding positions include 436–438 (IGS) and glutamate 489. 5-methyltetrahydropteroyltri-L-glutamate is bound by residues 520–521 (RC) and tryptophan 566. An L-homocysteine-binding site is contributed by aspartate 604. Aspartate 604 lines the L-methionine pocket. Glutamate 610 contributes to the 5-methyltetrahydropteroyltri-L-glutamate binding site. The Zn(2+) site is built by histidine 646, cysteine 648, and glutamate 670. Histidine 699 functions as the Proton donor in the catalytic mechanism. Cysteine 731 is a Zn(2+) binding site.

The protein belongs to the vitamin-B12 independent methionine synthase family. Zn(2+) is required as a cofactor.

The catalysed reaction is 5-methyltetrahydropteroyltri-L-glutamate + L-homocysteine = tetrahydropteroyltri-L-glutamate + L-methionine. Its pathway is amino-acid biosynthesis; L-methionine biosynthesis via de novo pathway; L-methionine from L-homocysteine (MetE route): step 1/1. In terms of biological role, catalyzes the transfer of a methyl group from 5-methyltetrahydrofolate to homocysteine resulting in methionine formation. This chain is 5-methyltetrahydropteroyltriglutamate--homocysteine methyltransferase, found in Baumannia cicadellinicola subsp. Homalodisca coagulata.